The sequence spans 662 residues: Probable quinol oxidase subunit 1 (662 aa).

A run of 2 helical transmembrane segments spans residues 14-34 (WMIT…IAVI) and 58-78 (LMYL…ALLL). Residue His102 coordinates Fe(II)-heme a. 8 helical membrane passes run 103–123 (GVIM…NVVV), 140–160 (ISFW…IIGG), 187–207 (VAIQ…FVTI), 228–248 (FITT…LALM), 273–293 (FFWV…FGIY), 311–331 (MVWA…HHFF), 336–356 (GALI…PTGV), and 376–396 (MLFS…GVML). The Cu cation site is built by His279, Tyr283, His328, and His329. The 1'-histidyl-3'-tyrosine (His-Tyr) cross-link spans 279–283 (HPEVY). Position 414 (His414) interacts with heme a3. The next 5 membrane-spanning stretches (helical) occupy residues 415–435 (FHYT…IFWY), 451–471 (CFWL…ILGL), 492–512 (VIST…VVSI), 586–605 (THTG…FLIF), and 609–628 (IPAA…QSFV). His416 is a Fe(II)-heme a binding site.

Belongs to the heme-copper respiratory oxidase family. Cu cation is required as a cofactor. Ferriheme a serves as cofactor. Requires Heme A3. as cofactor.

The protein localises to the cell membrane. The enzyme catalyses 2 a quinol + O2 = 2 a quinone + 2 H2O. The protein operates within energy metabolism; oxidative phosphorylation. Its function is as follows. Catalyzes quinol oxidation with the concomitant reduction of oxygen to water. This chain is Probable quinol oxidase subunit 1 (qoxB), found in Staphylococcus haemolyticus (strain JCSC1435).